The chain runs to 448 residues: MNVYELNMDGLVGQTHHYAGLSSGNIASTNNALSISNPQAAARQGLEKMRRLYNMGLKQGLLPPHQRPNLNLLYQLGFKGTPSEQINKAYKTAPELLSACYSASCMWTANAATVSASVDTEDNKVHFTAANLISNLHRHQEADFSKKLLEFIFSNSDYFNHHPLLPKSMGTSDEGAANHNRLCQSHAHSGINLFVYGKKVLGNHQFEQSPIKYPARQTKEASEAIARNHLLNPERVIFACQNPLAIDQGVFHNDVISVANEHVFLVHEEAFYNQTYVLDQLREKADFPLVIIQISKEQISVSEAVDTYLFNSQLITLPDQKNMILIAPAECQANLKVKTCIDGLVADPQNPINSVYYLDLKQSMRNGGGPACLRLRVPLNDYELKAMHQGILIDNDLLDILDKWVLKYYRTELKISDLADPQLLYECLDALDELTQILKLGSIYPFQS.

Substrate-binding positions include 19 to 28, asparagine 110, and 137 to 138; these read AGLSSGNIAS and HR. Glutamate 174 is an active-site residue. Arginine 216 is a substrate binding site. Histidine 252 is a catalytic residue. The substrate site is built by aspartate 254 and asparagine 366. Cysteine 372 serves as the catalytic Nucleophile.

The protein belongs to the succinylarginine dihydrolase family. As to quaternary structure, homodimer.

It catalyses the reaction N(2)-succinyl-L-arginine + 2 H2O + 2 H(+) = N(2)-succinyl-L-ornithine + 2 NH4(+) + CO2. It functions in the pathway amino-acid degradation; L-arginine degradation via AST pathway; L-glutamate and succinate from L-arginine: step 2/5. In terms of biological role, catalyzes the hydrolysis of N(2)-succinylarginine into N(2)-succinylornithine, ammonia and CO(2). This is N-succinylarginine dihydrolase from Legionella pneumophila (strain Lens).